A 120-amino-acid polypeptide reads, in one-letter code: MTTNSRLCPSSPSSSLIKHLTTSGGPSTSLTIMLSVIAIRILPAGMRNWIRQALGSLLFASFLLLSSFHYPITLTLVPVYHESLVKPTSASFGGIRLSQLTMIMERRATPTCQDPSLTEV.

2 helical membrane-spanning segments follow: residues 26 to 46 (PSTS…PAGM) and 57 to 77 (LLFA…LTLV).

Its subcellular location is the membrane. This is an uncharacterized protein from Saccharomyces cerevisiae (strain ATCC 204508 / S288c) (Baker's yeast).